The sequence spans 464 residues: Dolichyl-diphosphooligosaccharide--protein glycosyltransferase subunit 1B (464 aa).

The N-terminal stretch at 1 to 24 is a signal peptide; sequence MAARIGIFSVFVAVLLSISAFSSA. Residues 25–436 lie on the Lumenal side of the membrane; that stretch reads QDLQIVNAER…TFKPIYMLAE (412 aa). N-linked (GlcNAc...) asparagine glycosylation is found at N106 and N298. K310 participates in a covalent cross-link: Glycyl lysine isopeptide (Lys-Gly) (interchain with G-Cter in ubiquitin). An N-linked (GlcNAc...) asparagine glycan is attached at N352. A helical membrane pass occupies residues 437 to 457; sequence PFMLVSAFFLVFVASLAYVHI. At 458-464 the chain is on the cytoplasmic side; the sequence is DLNIVRK.

The protein belongs to the OST1 family. Component of the oligosaccharyltransferase (OST) complex.

Its subcellular location is the endoplasmic reticulum membrane. The protein operates within protein modification; protein glycosylation. Its function is as follows. Subunit of the oligosaccharyl transferase (OST) complex that catalyzes the initial transfer of a defined glycan (Glc(3)Man(9)GlcNAc(2) in eukaryotes) from the lipid carrier dolichol-pyrophosphate to an asparagine residue within an Asn-X-Ser/Thr consensus motif in nascent polypeptide chains, the first step in protein N-glycosylation. N-glycosylation occurs cotranslationally and the complex associates with the Sec61 complex at the channel-forming translocon complex that mediates protein translocation across the endoplasmic reticulum (ER). All subunits are required for a maximal enzyme activity. The protein is Dolichyl-diphosphooligosaccharide--protein glycosyltransferase subunit 1B (OST1B) of Arabidopsis thaliana (Mouse-ear cress).